The sequence spans 133 residues: Cytidine deaminase (133 aa).

Positions 3-131 constitute a CMP/dCMP-type deaminase domain; the sequence is VDLDWVHHKL…EILKGGFRSY (129 aa). 43–45 provides a ligand contact to substrate; it reads NIE. Cys-54 contacts Zn(2+). Glu-56 serves as the catalytic Proton donor. 2 residues coordinate Zn(2+): Cys-89 and Cys-92.

The protein belongs to the cytidine and deoxycytidylate deaminase family. Homodimer. Zn(2+) serves as cofactor.

It catalyses the reaction cytidine + H2O + H(+) = uridine + NH4(+). It carries out the reaction 2'-deoxycytidine + H2O + H(+) = 2'-deoxyuridine + NH4(+). Functionally, this enzyme scavenges exogenous and endogenous cytidine and 2'-deoxycytidine for UMP synthesis. This Mycoplasma pneumoniae (strain ATCC 29342 / M129 / Subtype 1) (Mycoplasmoides pneumoniae) protein is Cytidine deaminase (cdd).